A 138-amino-acid polypeptide reads, in one-letter code: Basic phospholipase A2 Cvv-N6 (138 aa).

An N-terminal signal peptide occupies residues 1 to 16 (MRTFWIVALLLVGVEG). 7 cysteine pairs are disulfide-bonded: C42–C131, C44–C60, C59–C111, C65–C138, C66–C104, C73–C97, and C91–C102. Ca(2+)-binding residues include Y43, G45, and G47. The active site involves H63. D64 lines the Ca(2+) pocket. Residue D105 is part of the active site.

The protein belongs to the phospholipase A2 family. Group II subfamily. D49 sub-subfamily. In terms of assembly, monomer. Binds to calmodulin. It depends on Ca(2+) as a cofactor. As to expression, expressed by the venom gland.

The protein localises to the secreted. The catalysed reaction is a 1,2-diacyl-sn-glycero-3-phosphocholine + H2O = a 1-acyl-sn-glycero-3-phosphocholine + a fatty acid + H(+). Its activity is regulated as follows. Heparin and wedelolactone inhibit the myotoxic activity. The PLA2 inhibitor, para-bromophenacyl bromide (BPB), inhibits enzymatic and myotoxic activities. Functionally, snake venom phospholipase A2 (PLA2) that is myotoxic and displays moderate edema-inducing activity in rat paws. Does not show neurotoxic activity. PLA2 catalyzes the calcium-dependent hydrolysis of the 2-acyl groups in 3-sn-phosphoglycerides. The polypeptide is Basic phospholipase A2 Cvv-N6 (Crotalus viridis viridis (Prairie rattlesnake)).